The primary structure comprises 388 residues: T-cell surface glycoprotein CD1e, membrane-associated (388 aa).

A signal peptide spans 1-19 (MLLLFLLFEGLCCPGENTA). A propeptide spans 20–31 (APQALQSYHLAA) (removed in sCD1e). Residues Asn-47 and Asn-84 are each glycosylated (N-linked (GlcNAc...) asparagine). An Ig-like domain is found at 191-301 (PRFLAGLMEA…LGGHDLIIHW (111 aa)). Cys-230 and Cys-285 form a disulfide bridge. Residues 305–325 (SIFLILICLTVIVTLVILVVV) traverse the membrane as a helical segment.

In terms of assembly, heterodimer with B2M (beta-2-microglobulin). The association with B2M appears to be facilitated by the presence of the propeptide. Mono-ubiquitinated. Post-translationally, proteolytically cleaved in late endosomes to yield a soluble form. Expressed on cortical thymocytes, dendritic cells, Langerhans cells, on certain T-cell leukemias, and in various other tissues.

Its subcellular location is the golgi apparatus membrane. It localises to the early endosome. It is found in the late endosome. The protein localises to the lysosome lumen. In terms of biological role, T-cell surface glycoprotein CD1e, soluble binds diacetylated lipids, including phosphatidyl inositides and diacylated sulfoglycolipids, and is required for the presentation of glycolipid antigens on the cell surface. The membrane-associated form is not active. The chain is T-cell surface glycoprotein CD1e, membrane-associated (CD1E) from Homo sapiens (Human).